Here is a 424-residue protein sequence, read N- to C-terminus: UDP-N-acetylglucosamine 1-carboxyvinyltransferase (424 aa).

Phosphoenolpyruvate is bound at residue 22–23 (KN). Position 93 (Arg-93) interacts with UDP-N-acetyl-alpha-D-glucosamine. The Proton donor role is filled by Cys-117. Cys-117 is modified (2-(S-cysteinyl)pyruvic acid O-phosphothioketal). UDP-N-acetyl-alpha-D-glucosamine is bound by residues 162–165 (KVSV), Asp-307, and Ile-329.

This sequence belongs to the EPSP synthase family. MurA subfamily.

It is found in the cytoplasm. The catalysed reaction is phosphoenolpyruvate + UDP-N-acetyl-alpha-D-glucosamine = UDP-N-acetyl-3-O-(1-carboxyvinyl)-alpha-D-glucosamine + phosphate. It participates in cell wall biogenesis; peptidoglycan biosynthesis. Functionally, cell wall formation. Adds enolpyruvyl to UDP-N-acetylglucosamine. The sequence is that of UDP-N-acetylglucosamine 1-carboxyvinyltransferase from Actinobacillus pleuropneumoniae serotype 7 (strain AP76).